Here is a 593-residue protein sequence, read N- to C-terminus: NADH-quinone oxidoreductase subunit C/D (593 aa).

Residues 1 to 184 (MTADNAIFIP…DPYSLTLAKQ (184 aa)) form an NADH dehydrogenase I subunit C region. Residues 208–593 (DYMFLNLGPN…IDFVMADVDR (386 aa)) form an NADH dehydrogenase I subunit D region.

In the N-terminal section; belongs to the complex I 30 kDa subunit family. The protein in the C-terminal section; belongs to the complex I 49 kDa subunit family. As to quaternary structure, NDH-1 is composed of 13 different subunits. Subunits NuoB, CD, E, F, and G constitute the peripheral sector of the complex.

Its subcellular location is the cell inner membrane. The catalysed reaction is a quinone + NADH + 5 H(+)(in) = a quinol + NAD(+) + 4 H(+)(out). Functionally, NDH-1 shuttles electrons from NADH, via FMN and iron-sulfur (Fe-S) centers, to quinones in the respiratory chain. The immediate electron acceptor for the enzyme in this species is believed to be ubiquinone. Couples the redox reaction to proton translocation (for every two electrons transferred, four hydrogen ions are translocated across the cytoplasmic membrane), and thus conserves the redox energy in a proton gradient. The polypeptide is NADH-quinone oxidoreductase subunit C/D (Pseudomonas putida (strain ATCC 47054 / DSM 6125 / CFBP 8728 / NCIMB 11950 / KT2440)).